The following is a 365-amino-acid chain: 3-dehydroquinate synthase (365 aa).

Residues Gly106–Asp110, Thr130–Thr131, Lys142, Lys151, and Phe169–Thr172 each bind NAD(+). Zn(2+)-binding residues include Glu184, His247, and His264.

The protein belongs to the sugar phosphate cyclases superfamily. Dehydroquinate synthase family. The cofactor is NAD(+). Requires Co(2+) as cofactor. Zn(2+) is required as a cofactor.

The protein resides in the cytoplasm. It carries out the reaction 7-phospho-2-dehydro-3-deoxy-D-arabino-heptonate = 3-dehydroquinate + phosphate. It functions in the pathway metabolic intermediate biosynthesis; chorismate biosynthesis; chorismate from D-erythrose 4-phosphate and phosphoenolpyruvate: step 2/7. Catalyzes the conversion of 3-deoxy-D-arabino-heptulosonate 7-phosphate (DAHP) to dehydroquinate (DHQ). The protein is 3-dehydroquinate synthase of Listeria monocytogenes serotype 4b (strain F2365).